Reading from the N-terminus, the 248-residue chain is UPF0246 protein RAF_ORF0648 (248 aa).

The protein belongs to the UPF0246 family.

The polypeptide is UPF0246 protein RAF_ORF0648 (Rickettsia africae (strain ESF-5)).